The following is a 347-amino-acid chain: NADH-ubiquinone oxidoreductase chain 2 (347 aa).

Transmembrane regions (helical) follow at residues 3 to 23 (PLIFTMIMLTVILGTTIVMMS), 25 to 45 (HWLMIWMGFEMNMLAVIPLLM), 59 to 79 (YFLTQATASMLLMLAVIINLL), 96 to 116 (IIMTLALGMKMGLAPFHFWVP), 122 to 144 (ISLSSGLILLTWQKLAPLSVLYV), 149 to 171 (INLDLILLMSMMSIAIGGWGGLN), 178 to 198 (ILAYSSIAHMGWMASILVFNP), 202 to 222 (LLNLLLYILMTTTTFMLFMVA), 247 to 267 (IMLSLGGLPPLTGFLPKWMII), 276 to 296 (ITLATLMAITALLNLFFYMRL), and 326 to 346 (LPVLIILSTITLPLAPAITLL).

It belongs to the complex I subunit 2 family. In terms of assembly, core subunit of respiratory chain NADH dehydrogenase (Complex I) which is composed of 45 different subunits. Interacts with TMEM242.

It is found in the mitochondrion inner membrane. It carries out the reaction a ubiquinone + NADH + 5 H(+)(in) = a ubiquinol + NAD(+) + 4 H(+)(out). In terms of biological role, core subunit of the mitochondrial membrane respiratory chain NADH dehydrogenase (Complex I) which catalyzes electron transfer from NADH through the respiratory chain, using ubiquinone as an electron acceptor. Essential for the catalytic activity and assembly of complex I. The sequence is that of NADH-ubiquinone oxidoreductase chain 2 from Saccopteryx bilineata (Greater white-lined bat).